A 562-amino-acid chain; its full sequence is Transmembrane E3 ubiquitin-protein ligase FLY1 (562 aa).

The signal sequence occupies residues M1–G32. The Lumenal portion of the chain corresponds to L33 to N262. A helical membrane pass occupies residues K263–I283. Topologically, residues R284–K297 are cytoplasmic. A helical membrane pass occupies residues V298–L318. The Lumenal segment spans residues T319 to G321. Residues I322–F342 form a helical membrane-spanning segment. Residues S343–L373 lie on the Cytoplasmic side of the membrane. A helical membrane pass occupies residues S374 to F394. The Lumenal portion of the chain corresponds to H395–Y397. The helical transmembrane segment at M398–V418 threads the bilayer. Topologically, residues R419–H426 are cytoplasmic. The chain crosses the membrane as a helical span at residues P427–C447. The Lumenal segment spans residues P448 to K458. The helical transmembrane segment at V459–H479 threads the bilayer. Over Y480 to A562 the chain is Cytoplasmic. The segment at C512–R556 adopts an RING-type; atypical zinc-finger fold.

As to expression, highly expressed in stems. Expressed in root xylem and seed coat.

It is found in the endomembrane system. The enzyme catalyses S-ubiquitinyl-[E2 ubiquitin-conjugating enzyme]-L-cysteine + [acceptor protein]-L-lysine = [E2 ubiquitin-conjugating enzyme]-L-cysteine + N(6)-ubiquitinyl-[acceptor protein]-L-lysine.. Its pathway is protein modification; protein ubiquitination. Functionally, E3 ubiquitin-protein ligase that regulates the degree of methylesterification of pectin in seed mucilage. May be involved in the recycling of pectin methylesterase enzymes in the endomembrane system of seed coat epidermal cells. Possesses E3 ubiquitin-protein ligase activity in vitro when associated with the E1 enzyme UBA1 and the E2 enzyme UBC8. May be involved in xylem development. In Arabidopsis thaliana (Mouse-ear cress), this protein is Transmembrane E3 ubiquitin-protein ligase FLY1.